A 123-amino-acid chain; its full sequence is Large ribosomal subunit protein uL18 (123 aa).

This sequence belongs to the universal ribosomal protein uL18 family. Part of the 50S ribosomal subunit; part of the 5S rRNA/L5/L18/L25 subcomplex. Contacts the 5S and 23S rRNAs.

This is one of the proteins that bind and probably mediate the attachment of the 5S RNA into the large ribosomal subunit, where it forms part of the central protuberance. The polypeptide is Large ribosomal subunit protein uL18 (Bifidobacterium longum (strain DJO10A)).